Reading from the N-terminus, the 83-residue chain is Protein Vpr (83 aa).

A Phosphoserine; by host modification is found at Ser-79.

In terms of assembly, interacts with human UNG.

Its subcellular location is the virion. The protein localises to the host nucleus. Stimulates gene expression driven by the HIV-2 LTR. Prevents infected cells from undergoing mitosis and proliferating, by inducing arrest or delay in the G2 phase of the cell cycle. Cell cycle arrest creates a favorable environment for maximizing viral expression and production. This is Protein Vpr from Pan troglodytes (Chimpanzee).